The primary structure comprises 249 residues: Large ribosomal subunit protein uL30A (249 aa).

Belongs to the universal ribosomal protein uL30 family. In terms of assembly, component of the small ribosomal subunit (SSU). Mature yeast ribosomes consist of a small (40S) and a large (60S) subunit. The 40S small subunit contains 1 molecule of ribosomal RNA (18S rRNA) and at least 33 different proteins. The large 60S subunit contains 3 rRNA molecules (25S, 5.8S and 5S rRNA) and at least 46 different proteins.

The protein localises to the cytoplasm. The protein resides in the nucleus. It localises to the nucleolus. In terms of biological role, component of the ribosome, a large ribonucleoprotein complex responsible for the synthesis of proteins in the cell. The small ribosomal subunit (SSU) binds messenger RNAs (mRNAs) and translates the encoded message by selecting cognate aminoacyl-transfer RNA (tRNA) molecules. The large subunit (LSU) contains the ribosomal catalytic site termed the peptidyl transferase center (PTC), which catalyzes the formation of peptide bonds, thereby polymerizing the amino acids delivered by tRNAs into a polypeptide chain. The nascent polypeptides leave the ribosome through a tunnel in the LSU and interact with protein factors that function in enzymatic processing, targeting, and the membrane insertion of nascent chains at the exit of the ribosomal tunnel. The polypeptide is Large ribosomal subunit protein uL30A (rlp7) (Schizosaccharomyces pombe (strain 972 / ATCC 24843) (Fission yeast)).